We begin with the raw amino-acid sequence, 617 residues long: Protein fem-1 homolog C (617 aa).

ANK repeat units lie at residues 2–31 (DLKT…KDDV), 40–70 (NGAT…SVEI), 82–111 (EGAP…SVNN), 115–144 (TNST…DLEV), 148–177 (HGHT…DVNR), 181–210 (KGNT…RMEK), and 213–242 (YGMT…TSKN). TPR repeat units lie at residues 245-279 (INAL…RHSD) and 338-371 (SYYI…QQNN). ANK repeat units lie at residues 481 to 523 (NNFS…DVNV) and 527 to 556 (EQNS…HFDS).

This sequence belongs to the fem-1 family. In terms of assembly, component of a CRL2 E3 ubiquitin-protein ligase complex, also named ECS (Elongin BC-CUL2/5-SOCS-box protein) complex.

The protein operates within protein modification; protein ubiquitination. Functionally, substrate-recognition component of a Cul2-RING (CRL2) E3 ubiquitin-protein ligase complex of the DesCEND (destruction via C-end degrons) pathway, which recognizes a C-degron located at the extreme C terminus of target proteins, leading to their ubiquitination and degradation. The C-degron recognized by the DesCEND pathway is usually a motif of less than ten residues and can be present in full-length proteins, truncated proteins or proteolytically cleaved forms. The CRL2(FEM1C) complex specifically recognizes proteins with an arginine at the C-terminus: recognizes and binds proteins ending with -Lys/Arg-Xaa-Arg and -Lys/Arg-Xaa-Xaa-Arg C-degrons, leading to their ubiquitination and degradation. This is Protein fem-1 homolog C from Xenopus laevis (African clawed frog).